Here is a 107-residue protein sequence, read N- to C-terminus: Small ribosomal subunit protein uS10c (107 aa).

The protein belongs to the universal ribosomal protein uS10 family. In terms of assembly, part of the 30S ribosomal subunit.

Its subcellular location is the plastid. It localises to the chloroplast. Functionally, involved in the binding of tRNA to the ribosomes. The polypeptide is Small ribosomal subunit protein uS10c (Thalassiosira pseudonana (Marine diatom)).